The primary structure comprises 117 residues: Putative membrane protein insertion efficiency factor (117 aa).

It belongs to the UPF0161 family.

The protein localises to the cell inner membrane. Its function is as follows. Could be involved in insertion of integral membrane proteins into the membrane. This is Putative membrane protein insertion efficiency factor from Helicobacter pylori (strain ATCC 700392 / 26695) (Campylobacter pylori).